The primary structure comprises 218 residues: Cell division protein SepF (218 aa).

The tract at residues 25-115 is disordered; sequence DVAASTDNVI…IANRREQYQQ (91 aa). A compositionally biased stretch (polar residues) spans 29–43; the sequence is STDNVIPRSQQSVRA. The segment covering 47–63 has biased composition (basic and acidic residues); sequence PKQEPRNNHVQQDHQAR. A compositionally biased stretch (polar residues) spans 102-115; that stretch reads STSSIANRREQYQQ.

This sequence belongs to the SepF family. Homodimer. Interacts with FtsZ.

The protein localises to the cytoplasm. Cell division protein that is part of the divisome complex and is recruited early to the Z-ring. Probably stimulates Z-ring formation, perhaps through the cross-linking of FtsZ protofilaments. Its function overlaps with FtsA. In Streptococcus pyogenes serotype M5 (strain Manfredo), this protein is Cell division protein SepF.